The chain runs to 505 residues: ATP synthase subunit alpha (505 aa).

169-176 (GDRQIGKT) serves as a coordination point for ATP.

This sequence belongs to the ATPase alpha/beta chains family. In terms of assembly, F-type ATPases have 2 components, CF(1) - the catalytic core - and CF(0) - the membrane proton channel. CF(1) has five subunits: alpha(3), beta(3), gamma(1), delta(1), epsilon(1). CF(0) has three main subunits: a(1), b(2) and c(9-12). The alpha and beta chains form an alternating ring which encloses part of the gamma chain. CF(1) is attached to CF(0) by a central stalk formed by the gamma and epsilon chains, while a peripheral stalk is formed by the delta and b chains.

It localises to the cell inner membrane. The enzyme catalyses ATP + H2O + 4 H(+)(in) = ADP + phosphate + 5 H(+)(out). In terms of biological role, produces ATP from ADP in the presence of a proton gradient across the membrane. The alpha chain is a regulatory subunit. The protein is ATP synthase subunit alpha of Desulfosudis oleivorans (strain DSM 6200 / JCM 39069 / Hxd3) (Desulfococcus oleovorans).